A 235-amino-acid polypeptide reads, in one-letter code: Ubiquinone/menaquinone biosynthesis C-methyltransferase UbiE (235 aa).

S-adenosyl-L-methionine contacts are provided by Thr59, Asp84, and Ser123.

This sequence belongs to the class I-like SAM-binding methyltransferase superfamily. MenG/UbiE family.

It carries out the reaction a 2-demethylmenaquinol + S-adenosyl-L-methionine = a menaquinol + S-adenosyl-L-homocysteine + H(+). The catalysed reaction is a 2-methoxy-6-(all-trans-polyprenyl)benzene-1,4-diol + S-adenosyl-L-methionine = a 5-methoxy-2-methyl-3-(all-trans-polyprenyl)benzene-1,4-diol + S-adenosyl-L-homocysteine + H(+). Its pathway is quinol/quinone metabolism; menaquinone biosynthesis; menaquinol from 1,4-dihydroxy-2-naphthoate: step 2/2. It functions in the pathway cofactor biosynthesis; ubiquinone biosynthesis. Methyltransferase required for the conversion of demethylmenaquinol (DMKH2) to menaquinol (MKH2) and the conversion of 2-polyprenyl-6-methoxy-1,4-benzoquinol (DDMQH2) to 2-polyprenyl-3-methyl-6-methoxy-1,4-benzoquinol (DMQH2). This Campylobacter jejuni subsp. jejuni serotype O:2 (strain ATCC 700819 / NCTC 11168) protein is Ubiquinone/menaquinone biosynthesis C-methyltransferase UbiE.